Consider the following 132-residue polypeptide: Small ribosomal subunit protein bS6 (132 aa).

Residues 94–132 (DAVTEESQLAKNADEKRARKATTRRPDRDDSDDNDHSED) are disordered. A compositionally biased stretch (acidic residues) spans 122–132 (DDSDDNDHSED).

The protein belongs to the bacterial ribosomal protein bS6 family.

In terms of biological role, binds together with bS18 to 16S ribosomal RNA. In Psychrobacter arcticus (strain DSM 17307 / VKM B-2377 / 273-4), this protein is Small ribosomal subunit protein bS6.